Reading from the N-terminus, the 147-residue chain is Peptide methionine sulfoxide reductase MsrB (147 aa).

A MsrB domain is found at 25–147 (DEYWREHLTE…NSVSLIFNKK (123 aa)). Zn(2+) is bound by residues Cys64, Cys67, Cys113, and Cys116. The active-site Nucleophile is the Cys136.

This sequence belongs to the MsrB Met sulfoxide reductase family. Zn(2+) serves as cofactor.

It catalyses the reaction L-methionyl-[protein] + [thioredoxin]-disulfide + H2O = L-methionyl-(R)-S-oxide-[protein] + [thioredoxin]-dithiol. This Vibrio cholerae serotype O1 (strain ATCC 39541 / Classical Ogawa 395 / O395) protein is Peptide methionine sulfoxide reductase MsrB.